The following is a 135-amino-acid chain: MAEFKVVIADPNTGETFQREVDGQDANRFLGRDIGDEIGGDAVGLSEHTIAITGGSDETGRPMREDVSGTRLKELLLEGGVGFEPSREGERKRITVRGREIDNDVAQINVSVVEGDDVAAALGEGDADADDADEE.

Belongs to the eukaryotic ribosomal protein eS6 family.

The polypeptide is Small ribosomal subunit protein eS6 (Halorubrum lacusprofundi (strain ATCC 49239 / DSM 5036 / JCM 8891 / ACAM 34)).